The following is a 145-amino-acid chain: 3-hydroxyacyl-[acyl-carrier-protein] dehydratase FabZ (145 aa).

Residue H49 is part of the active site.

It belongs to the thioester dehydratase family. FabZ subfamily.

It localises to the cytoplasm. It carries out the reaction a (3R)-hydroxyacyl-[ACP] = a (2E)-enoyl-[ACP] + H2O. Involved in unsaturated fatty acids biosynthesis. Catalyzes the dehydration of short chain beta-hydroxyacyl-ACPs and long chain saturated and unsaturated beta-hydroxyacyl-ACPs. The sequence is that of 3-hydroxyacyl-[acyl-carrier-protein] dehydratase FabZ from Anaplasma phagocytophilum (strain HZ).